Reading from the N-terminus, the 122-residue chain is T-cell receptor beta chain V region C5 (122 aa).

An N-terminal signal peptide occupies residues 1 to 7; it reads ILLCAKH. The segment at 8-103 is v segment; sequence MEAAVTQSPR…TAVYFCASSG (96 aa). C31 and C99 are joined by a disulfide. Positions 104–108 are d segment; the sequence is TGGAL. The segment at 109–122 is j segment; sequence DTQYFGPGTRLLVL.

The chain is T-cell receptor beta chain V region C5 from Mus musculus (Mouse).